We begin with the raw amino-acid sequence, 64 residues long: Potassium channel toxin kappa-KTx 3.4 (64 aa).

The first 26 residues, 1-26 (MKSTLMTASLLILVLLSIIDYASVYA), serve as a signal peptide directing secretion. The propeptide occupies 27-36 (EFIDSEISLE). Disulfide bonds link cysteine 43–cysteine 61 and cysteine 47–cysteine 57.

It belongs to the short scorpion toxin superfamily. Potassium channel inhibitor kappa-KTx family. Kappa-KTx 3 subfamily. In terms of tissue distribution, expressed by the venom gland.

The protein localises to the secreted. In terms of biological role, potassium channel inhibitor (Kv). In Heterometrus petersii (Asian forest scorpion), this protein is Potassium channel toxin kappa-KTx 3.4.